Here is a 229-residue protein sequence, read N- to C-terminus: UPF0173 metal-dependent hydrolase SAOUHSC_01815 (229 aa).

This sequence belongs to the UPF0173 family.

This is UPF0173 metal-dependent hydrolase SAOUHSC_01815 from Staphylococcus aureus (strain NCTC 8325 / PS 47).